The following is a 336-amino-acid chain: Glyceraldehyde-3-phosphate dehydrogenase, chromosomal (336 aa).

NAD(+) is bound by residues 12–13, aspartate 37, arginine 81, and serine 123; that span reads RI. D-glyceraldehyde 3-phosphate-binding positions include 154–156 and threonine 185; that span reads SCT. Cysteine 155 acts as the Nucleophile in catalysis. Asparagine 186 is a binding site for NAD(+). D-glyceraldehyde 3-phosphate is bound by residues arginine 200, 213–214, and arginine 236; that span reads TG. Position 317 (asparagine 317) interacts with NAD(+).

This sequence belongs to the glyceraldehyde-3-phosphate dehydrogenase family. As to quaternary structure, homotetramer.

It catalyses the reaction D-glyceraldehyde 3-phosphate + phosphate + NAD(+) = (2R)-3-phospho-glyceroyl phosphate + NADH + H(+). It participates in carbohydrate biosynthesis; Calvin cycle. Functionally, could be involved in carbon fixation as a component of the Calvin cycle. Catalyzes the oxidative phosphorylation of glyceraldehyde 3-phosphate (G3P) to 1,3-bisphosphoglycerate (BPG) using the cofactor NAD. The first reaction step involves the formation of a hemiacetal intermediate between G3P and a cysteine residue, and this hemiacetal intermediate is then oxidized to a thioester, with concomitant reduction of NAD to NADH. The reduced NADH is then exchanged with the second NAD, and the thioester is attacked by a nucleophilic inorganic phosphate to produce BPG. The chain is Glyceraldehyde-3-phosphate dehydrogenase, chromosomal (cbbGC) from Cupriavidus necator (strain ATCC 17699 / DSM 428 / KCTC 22496 / NCIMB 10442 / H16 / Stanier 337) (Ralstonia eutropha).